Here is a 60-residue protein sequence, read N- to C-terminus: Potassium channel toxin alpha-KTx 29.2 (60 aa).

A signal peptide spans 1-28 (MKSVCGVLIILVVLTTMLSISTFSTVGA). 3 cysteine pairs are disulfide-bonded: C32–C51, C40–C56, and C44–C58.

It belongs to the short scorpion toxin superfamily. Potassium channel inhibitor family. Alpha-KTx 29 subfamily. In terms of tissue distribution, expressed by the venom gland.

The protein resides in the secreted. In terms of biological role, weakly inhibits the Kv1.3/KCNA3 channel (1 uM of thetoxin inhibits currents by 13.2%) and Kv7.1/KCNQ1 channel (10 uM of the toxin inhibits currents by 27.7%). The protein is Potassium channel toxin alpha-KTx 29.2 of Lychas mucronatus (Chinese swimming scorpion).